We begin with the raw amino-acid sequence, 266 residues long: 3-methyl-2-oxobutanoate hydroxymethyltransferase (266 aa).

Positions 47 and 86 each coordinate Mg(2+). 3-methyl-2-oxobutanoate-binding positions include 47–48, D86, and K114; that span reads DS. E116 is a binding site for Mg(2+). E183 serves as the catalytic Proton acceptor.

The protein belongs to the PanB family. In terms of assembly, homodecamer; pentamer of dimers. Mg(2+) is required as a cofactor.

The protein localises to the cytoplasm. It catalyses the reaction 3-methyl-2-oxobutanoate + (6R)-5,10-methylene-5,6,7,8-tetrahydrofolate + H2O = 2-dehydropantoate + (6S)-5,6,7,8-tetrahydrofolate. Its pathway is cofactor biosynthesis; (R)-pantothenate biosynthesis; (R)-pantoate from 3-methyl-2-oxobutanoate: step 1/2. In terms of biological role, catalyzes the reversible reaction in which hydroxymethyl group from 5,10-methylenetetrahydrofolate is transferred onto alpha-ketoisovalerate to form ketopantoate. This Idiomarina loihiensis (strain ATCC BAA-735 / DSM 15497 / L2-TR) protein is 3-methyl-2-oxobutanoate hydroxymethyltransferase.